A 381-amino-acid chain; its full sequence is Homoserine O-succinyltransferase (381 aa).

The AB hydrolase-1 domain occupies 53–361; it reads ILICHALSGS…DSVHGHDAFL (309 aa). The active-site Nucleophile is the S157. R227 is a substrate binding site. Residues D324 and H357 contribute to the active site. D358 contributes to the substrate binding site.

The protein belongs to the AB hydrolase superfamily. MetX family. As to quaternary structure, homodimer.

It is found in the cytoplasm. It carries out the reaction L-homoserine + succinyl-CoA = O-succinyl-L-homoserine + CoA. It functions in the pathway amino-acid biosynthesis; L-methionine biosynthesis via de novo pathway; O-succinyl-L-homoserine from L-homoserine: step 1/1. Transfers a succinyl group from succinyl-CoA to L-homoserine, forming succinyl-L-homoserine. This Saccharophagus degradans (strain 2-40 / ATCC 43961 / DSM 17024) protein is Homoserine O-succinyltransferase.